The chain runs to 58 residues: MLGWTLMFLVVAIIAGLFGFTGIAGAAAGIAKIIFFLFIVLLVISLLVNAIKGRAPRP.

The next 2 membrane-spanning stretches (helical) occupy residues 6–26 (LMFL…IAGA) and 28–48 (AGIA…SLLV).

It belongs to the UPF0391 family.

The protein resides in the cell membrane. The sequence is that of UPF0391 membrane protein Sputcn32_1322 from Shewanella putrefaciens (strain CN-32 / ATCC BAA-453).